The primary structure comprises 160 residues: 2-C-methyl-D-erythritol 2,4-cyclodiphosphate synthase (160 aa).

Aspartate 12 and histidine 14 together coordinate a divalent metal cation. Residues 12–14 and 38–39 each bind 4-CDP-2-C-methyl-D-erythritol 2-phosphate; these read DVH and HS. Residue histidine 46 participates in a divalent metal cation binding. Residues 60 to 62, 65 to 69, 136 to 139, phenylalanine 143, and arginine 146 each bind 4-CDP-2-C-methyl-D-erythritol 2-phosphate; these read DIG, FPDTD, and TTTE.

Belongs to the IspF family. In terms of assembly, homotrimer. Requires a divalent metal cation as cofactor.

It carries out the reaction 4-CDP-2-C-methyl-D-erythritol 2-phosphate = 2-C-methyl-D-erythritol 2,4-cyclic diphosphate + CMP. Its pathway is isoprenoid biosynthesis; isopentenyl diphosphate biosynthesis via DXP pathway; isopentenyl diphosphate from 1-deoxy-D-xylulose 5-phosphate: step 4/6. In terms of biological role, involved in the biosynthesis of isopentenyl diphosphate (IPP) and dimethylallyl diphosphate (DMAPP), two major building blocks of isoprenoid compounds. Catalyzes the conversion of 4-diphosphocytidyl-2-C-methyl-D-erythritol 2-phosphate (CDP-ME2P) to 2-C-methyl-D-erythritol 2,4-cyclodiphosphate (ME-CPP) with a corresponding release of cytidine 5-monophosphate (CMP). The polypeptide is 2-C-methyl-D-erythritol 2,4-cyclodiphosphate synthase (Acinetobacter baumannii (strain AB307-0294)).